Consider the following 709-residue polypeptide: DNA ligase (709 aa).

The disordered stretch occupies residues 1-20 (MTATHRGAQADASAPAGPLP). Residues 52–56 (DAEYD), 101–102 (SL), and Glu-146 each bind NAD(+). Lys-148 serves as the catalytic N6-AMP-lysine intermediate. NAD(+)-binding residues include Arg-169, Glu-205, Lys-322, and Lys-346. Residues Cys-440, Cys-443, Cys-458, and Cys-464 each contribute to the Zn(2+) site. In terms of domain architecture, BRCT spans 623–709 (KAPAPLSGKT…AEAGAAPAQE (87 aa)).

It belongs to the NAD-dependent DNA ligase family. LigA subfamily. It depends on Mg(2+) as a cofactor. Requires Mn(2+) as cofactor.

The catalysed reaction is NAD(+) + (deoxyribonucleotide)n-3'-hydroxyl + 5'-phospho-(deoxyribonucleotide)m = (deoxyribonucleotide)n+m + AMP + beta-nicotinamide D-nucleotide.. Functionally, DNA ligase that catalyzes the formation of phosphodiester linkages between 5'-phosphoryl and 3'-hydroxyl groups in double-stranded DNA using NAD as a coenzyme and as the energy source for the reaction. It is essential for DNA replication and repair of damaged DNA. The protein is DNA ligase of Cupriavidus necator (strain ATCC 17699 / DSM 428 / KCTC 22496 / NCIMB 10442 / H16 / Stanier 337) (Ralstonia eutropha).